Here is a 429-residue protein sequence, read N- to C-terminus: UDP-N-acetylglucosamine 1-carboxyvinyltransferase (429 aa).

22 to 23 (KN) is a binding site for phosphoenolpyruvate. Residue R102 coordinates UDP-N-acetyl-alpha-D-glucosamine. C126 acts as the Proton donor in catalysis. C126 carries the 2-(S-cysteinyl)pyruvic acid O-phosphothioketal modification. Residues 131 to 135 (RPVDL), D316, and I338 contribute to the UDP-N-acetyl-alpha-D-glucosamine site.

The protein belongs to the EPSP synthase family. MurA subfamily.

Its subcellular location is the cytoplasm. It carries out the reaction phosphoenolpyruvate + UDP-N-acetyl-alpha-D-glucosamine = UDP-N-acetyl-3-O-(1-carboxyvinyl)-alpha-D-glucosamine + phosphate. It participates in cell wall biogenesis; peptidoglycan biosynthesis. Functionally, cell wall formation. Adds enolpyruvyl to UDP-N-acetylglucosamine. The polypeptide is UDP-N-acetylglucosamine 1-carboxyvinyltransferase (Methylorubrum populi (strain ATCC BAA-705 / NCIMB 13946 / BJ001) (Methylobacterium populi)).